Consider the following 279-residue polypeptide: Hydroxyethylthiazole kinase (279 aa).

Met-58 provides a ligand contact to substrate. ATP-binding residues include Lys-134 and Thr-180. Gly-207 provides a ligand contact to substrate.

The protein belongs to the Thz kinase family. Mg(2+) serves as cofactor.

The catalysed reaction is 5-(2-hydroxyethyl)-4-methylthiazole + ATP = 4-methyl-5-(2-phosphooxyethyl)-thiazole + ADP + H(+). It participates in cofactor biosynthesis; thiamine diphosphate biosynthesis; 4-methyl-5-(2-phosphoethyl)-thiazole from 5-(2-hydroxyethyl)-4-methylthiazole: step 1/1. Its function is as follows. Catalyzes the phosphorylation of the hydroxyl group of 4-methyl-5-beta-hydroxyethylthiazole (THZ). The protein is Hydroxyethylthiazole kinase of Methanoculleus marisnigri (strain ATCC 35101 / DSM 1498 / JR1).